A 218-amino-acid polypeptide reads, in one-letter code: Thiopurine S-methyltransferase (218 aa).

S-adenosyl-L-methionine-binding residues include Trp-10, Leu-45, Glu-66, and Arg-123.

This sequence belongs to the class I-like SAM-binding methyltransferase superfamily. TPMT family.

It localises to the cytoplasm. It catalyses the reaction S-adenosyl-L-methionine + a thiopurine = S-adenosyl-L-homocysteine + a thiopurine S-methylether.. This chain is Thiopurine S-methyltransferase, found in Shewanella baltica (strain OS195).